A 262-amino-acid polypeptide reads, in one-letter code: Thiazole synthase (262 aa).

K96 acts as the Schiff-base intermediate with DXP in catalysis. 1-deoxy-D-xylulose 5-phosphate is bound by residues G157, 184–185 (AG), and 206–207 (NT).

This sequence belongs to the ThiG family. In terms of assembly, homotetramer. Forms heterodimers with either ThiH or ThiS.

It localises to the cytoplasm. It carries out the reaction [ThiS sulfur-carrier protein]-C-terminal-Gly-aminoethanethioate + 2-iminoacetate + 1-deoxy-D-xylulose 5-phosphate = [ThiS sulfur-carrier protein]-C-terminal Gly-Gly + 2-[(2R,5Z)-2-carboxy-4-methylthiazol-5(2H)-ylidene]ethyl phosphate + 2 H2O + H(+). It functions in the pathway cofactor biosynthesis; thiamine diphosphate biosynthesis. Functionally, catalyzes the rearrangement of 1-deoxy-D-xylulose 5-phosphate (DXP) to produce the thiazole phosphate moiety of thiamine. Sulfur is provided by the thiocarboxylate moiety of the carrier protein ThiS. In vitro, sulfur can be provided by H(2)S. The chain is Thiazole synthase from Legionella pneumophila (strain Corby).